An 843-amino-acid polypeptide reads, in one-letter code: Protein P (843 aa).

Positions 1–177 (MPLSYQHFRK…FCGSPYSWEQ (177 aa)) are terminal protein domain (TP). The spacer stretch occupies residues 178–346 (DLQHGRLVFQ…YCLCHIVNLI (169 aa)). 2 disordered regions span residues 220-258 (KSRL…VGVE) and 292-319 (SKGH…SQGS). Residues 308-319 (PPNSSRSQSQGS) are compositionally biased toward low complexity. Residues 347-690 (DDWGPCAEHG…YLNLYPVARQ (344 aa)) are polymerase/reverse transcriptase domain (RT). A Reverse transcriptase domain is found at 357–600 (EHRIRTPRTP…YSLNFMGYVI (244 aa)). Mg(2+) is bound by residues D429, D551, and D552.

Belongs to the hepadnaviridae P protein family.

The enzyme catalyses DNA(n) + a 2'-deoxyribonucleoside 5'-triphosphate = DNA(n+1) + diphosphate. It catalyses the reaction Endonucleolytic cleavage to 5'-phosphomonoester.. With respect to regulation, activated by host HSP70 and HSP40 in vitro to be able to bind the epsilon loop of the pgRNA. Because deletion of the RNase H region renders the protein partly chaperone-independent, the chaperones may be needed indirectly to relieve occlusion of the RNA-binding site by this domain. Inhibited by several reverse-transcriptase inhibitors: Lamivudine, Adefovir and Entecavir. In terms of biological role, multifunctional enzyme that converts the viral RNA genome into dsDNA in viral cytoplasmic capsids. This enzyme displays a DNA polymerase activity that can copy either DNA or RNA templates, and a ribonuclease H (RNase H) activity that cleaves the RNA strand of RNA-DNA heteroduplexes in a partially processive 3'- to 5'-endonucleasic mode. Neo-synthesized pregenomic RNA (pgRNA) are encapsidated together with the P protein, and reverse-transcribed inside the nucleocapsid. Initiation of reverse-transcription occurs first by binding the epsilon loop on the pgRNA genome, and is initiated by protein priming, thereby the 5'-end of (-)DNA is covalently linked to P protein. Partial (+)DNA is synthesized from the (-)DNA template and generates the relaxed circular DNA (RC-DNA) genome. After budding and infection, the RC-DNA migrates in the nucleus, and is converted into a plasmid-like covalently closed circular DNA (cccDNA). The activity of P protein does not seem to be necessary for cccDNA generation, and is presumably released from (+)DNA by host nuclear DNA repair machinery. The protein is Protein P of Hepatitis B virus genotype B1 (isolate Japan/Yamagata-2/1998) (HBV-B).